The sequence spans 613 residues: MRPPWCPLHTPSLTPPLLLLLFLIGGGAEAEGPEDPELLVMVRGGRLRGLRLMAPRGPVSAFLGIPFAEPPVGPRRFLPPEPKRPWPGVLNATAFQSVCYQYVDTLYPGFEGTEMWNPNRELSEDCLYLNVWTPYPRPSSPTPVLVWIYGGGFYSGASSLDVYDGRFLTQAEGTVLVSMNYRVGAFGFLALPGSREAPGNVGLLDQRLALQWVQENVAAFGGDPTSVTLFGESAGAASVGMHLLSPPSRGLFHRAVLQSGAPNGPWATVGVGEARRRATLLARLVGCPPGGAGGNDTELVACLRARPAQDLVDHEWRVLPQESVFRFSFVPVVDGDFLSDTPEALINAGDFHGLQVLVGVVKDEGSYFLVYGAPGFSKDNESLISRAQFLAGVRVGVPQASDLAAEAVVLHYTDWLHPEDPARLREALSDVVGDHNVVCPVAQLAGRLAAQGARVYAYIFEHRASTLSWPLWMGVPHGYEIEFIFGLPLEPSLNYTIEERTFAQRLMRYWANFARTGDPNDPRDPKAPQWPPYTAGAQQYVSLNLRPLEVRRGLRAQACAFWNRFLPKLLSATDTLDEAERQWKAEFHRWSSYMVHWKNQFDHYSKQDRCSDL.

The first 30 residues, 1-30, serve as a signal peptide directing secretion; it reads MRPPWCPLHTPSLTPPLLLLLFLIGGGAEA. N-linked (GlcNAc...) asparagine glycosylation is present at Asn91. Cys99 and Cys126 form a disulfide bridge. Ser233 functions as the Acyl-ester intermediate in the catalytic mechanism. Cys287 and Cys302 are disulfide-bonded. An N-linked (GlcNAc...) asparagine glycan is attached at Asn295. The active-site Charge relay system is Glu364. The N-linked (GlcNAc...) asparagine glycan is linked to Asn380. Cys439 and Cys559 form a disulfide bridge. The active-site Charge relay system is His477. Asn494 is a glycosylation site (N-linked (GlcNAc...) asparagine).

Belongs to the type-B carboxylesterase/lipase family. In terms of assembly, interacts with PRIMA1. The interaction with PRIMA1 is required to anchor it to the basal lamina of cells and organize into tetramers. Isoform H generates GPI-anchored dimers; disulfide linked. Isoform T generates multiple structures, ranging from monomers and dimers to collagen-tailed and hydrophobic-tailed forms, in which catalytic tetramers are associated with anchoring proteins that attach them to the basal lamina or to cell membranes. In the collagen-tailed forms, isoform T subunits are associated with a specific collagen, COLQ, which triggers the formation of isoform T tetramers, from monomers and dimers.

It localises to the synapse. The protein resides in the secreted. It is found in the cell membrane. It carries out the reaction acetylcholine + H2O = choline + acetate + H(+). Functionally, terminates signal transduction at the neuromuscular junction by rapid hydrolysis of the acetylcholine released into the synaptic cleft. This chain is Acetylcholinesterase (ACHE), found in Bos taurus (Bovine).